Consider the following 229-residue polypeptide: Sec-independent protein translocase protein TatB (229 aa).

A helical membrane pass occupies residues 1–21 (MFDIGFSELLLFGVIALIVLG). Residues 90–131 (EFEHSQSQNLKTSDKAASPANQANNDSAIQNNNEPATFSYAY) are disordered. A compositionally biased stretch (polar residues) spans 108 to 131 (PANQANNDSAIQNNNEPATFSYAY).

This sequence belongs to the TatB family. As to quaternary structure, the Tat system comprises two distinct complexes: a TatABC complex, containing multiple copies of TatA, TatB and TatC subunits, and a separate TatA complex, containing only TatA subunits. Substrates initially bind to the TatABC complex, which probably triggers association of the separate TatA complex to form the active translocon.

The protein localises to the cell inner membrane. Part of the twin-arginine translocation (Tat) system that transports large folded proteins containing a characteristic twin-arginine motif in their signal peptide across membranes. Together with TatC, TatB is part of a receptor directly interacting with Tat signal peptides. TatB may form an oligomeric binding site that transiently accommodates folded Tat precursor proteins before their translocation. This Psychrobacter arcticus (strain DSM 17307 / VKM B-2377 / 273-4) protein is Sec-independent protein translocase protein TatB.